The chain runs to 500 residues: ATP synthase subunit alpha, sodium ion specific (500 aa).

169–176 (GDRQTGKT) is an ATP binding site.

Belongs to the ATPase alpha/beta chains family. F-type ATPases have 2 components, CF(1) - the catalytic core - and CF(0) - the membrane proton channel. CF(1) has five subunits: alpha(3), beta(3), gamma(1), delta(1), epsilon(1). CF(0) has three main subunits: a, b and c.

The protein localises to the cell membrane. It catalyses the reaction 4 Na(+)(in) + ATP + H2O = 4 Na(+)(out) + ADP + phosphate + H(+). In terms of biological role, produces ATP from ADP in the presence of a sodium ion gradient across the membrane. The alpha chain is a regulatory subunit. This chain is ATP synthase subunit alpha, sodium ion specific, found in Propionigenium modestum.